Consider the following 320-residue polypeptide: tRNA pseudouridine synthase B (320 aa).

The active-site Nucleophile is the aspartate 49.

The protein belongs to the pseudouridine synthase TruB family. Type 1 subfamily.

The catalysed reaction is uridine(55) in tRNA = pseudouridine(55) in tRNA. Its function is as follows. Responsible for synthesis of pseudouridine from uracil-55 in the psi GC loop of transfer RNAs. The chain is tRNA pseudouridine synthase B from Bartonella bacilliformis (strain ATCC 35685 / KC583 / Herrer 020/F12,63).